Here is a 1404-residue protein sequence, read N- to C-terminus: DNA-directed RNA polymerase subunit beta' (1404 aa).

The Zn(2+) site is built by Cys-70, Cys-72, Cys-85, and Cys-88. Asp-458, Asp-460, and Asp-462 together coordinate Mg(2+). Residues Cys-813, Cys-887, Cys-894, and Cys-897 each coordinate Zn(2+). A disordered region spans residues 1377–1404 (ERRAIAESEAAELEASQAETSDENAAAE).

The protein belongs to the RNA polymerase beta' chain family. The RNAP catalytic core consists of 2 alpha, 1 beta, 1 beta' and 1 omega subunit. When a sigma factor is associated with the core the holoenzyme is formed, which can initiate transcription. The cofactor is Mg(2+). It depends on Zn(2+) as a cofactor.

The enzyme catalyses RNA(n) + a ribonucleoside 5'-triphosphate = RNA(n+1) + diphosphate. In terms of biological role, DNA-dependent RNA polymerase catalyzes the transcription of DNA into RNA using the four ribonucleoside triphosphates as substrates. The chain is DNA-directed RNA polymerase subunit beta' from Polaromonas naphthalenivorans (strain CJ2).